A 231-amino-acid chain; its full sequence is Acyl-protein thioesterase 2 (231 aa).

Cysteine 2 is lipidated: S-palmitoyl cysteine. The residue at position 82 (serine 82) is a Phosphoserine. Residues serine 122, aspartate 176, and histidine 210 each act as charge relay system in the active site.

It belongs to the AB hydrolase superfamily. AB hydrolase 2 family. In terms of tissue distribution, ubiquitous; detected at low levels.

It is found in the cytoplasm. The enzyme catalyses S-hexadecanoyl-L-cysteinyl-[protein] + H2O = L-cysteinyl-[protein] + hexadecanoate + H(+). The catalysed reaction is prostaglandin E2 1-glyceryl ester + H2O = prostaglandin E2 + glycerol + H(+). It carries out the reaction 1-hexadecanoyl-sn-glycero-3-phosphocholine + H2O = sn-glycerol 3-phosphocholine + hexadecanoate + H(+). It catalyses the reaction 1-octadecanoyl-sn-glycero-3-phosphocholine + H2O = octadecanoate + sn-glycerol 3-phosphocholine + H(+). The enzyme catalyses 1-hexadecanoyl-sn-glycero-3-phosphate + H2O = sn-glycerol 3-phosphate + hexadecanoate + H(+). The catalysed reaction is 1-hexadecanoyl-sn-glycero-3-phospho-L-serine + H2O = sn-glycero-3-phospho-L-serine + hexadecanoate + H(+). Acts as an acyl-protein thioesterase hydrolyzing fatty acids from S-acylated cysteine residues in proteins such as trimeric G alpha proteins, GSDMD, GAP43, ZDHHC6 or HRAS. Deacylates GAP43. Mediates depalmitoylation of ZDHHC6. Has lysophospholipase activity. Hydrolyzes prostaglandin glycerol esters (PG-Gs). Hydrolyzes PG-Gs in the following order prostaglandin D2-glycerol ester (PGD2-G) &gt; prostaglandin E2 glycerol ester (PGE2-G) &gt; prostaglandin F2-alpha-glycerol ester (PGF2-alpha-G). Hydrolyzes 1-arachidonoylglycerol but not 2-arachidonoylglycerol or arachidonoylethanolamide. The protein is Acyl-protein thioesterase 2 (Lypla2) of Mus musculus (Mouse).